The chain runs to 86 residues: Large ribosomal subunit protein bL27 (86 aa).

A disordered region spans residues 1 to 24; that stretch reads MAHKKAMGSTENTRDSNPSYLGVK. Positions 9 to 19 are enriched in polar residues; it reads STENTRDSNPS.

Belongs to the bacterial ribosomal protein bL27 family.

The polypeptide is Large ribosomal subunit protein bL27 (Salinibacter ruber (strain DSM 13855 / M31)).